Consider the following 237-residue polypeptide: uncharacterized protein (237 aa).

An N-terminal signal peptide occupies residues 1-28; the sequence is MNRPLLSVAGSLFVAAWALYIFSCFQHG. Positions 52–96 are disordered; sequence NARDTAAHPSDTADNTSGSSTTTDPRSHGNAPPAPVGGAAQTHTQ. Residues 63–75 show a composition bias toward polar residues; sequence TADNTSGSSTTTD.

This is an uncharacterized protein from Treponema pallidum (strain Nichols).